Here is a 462-residue protein sequence, read N- to C-terminus: Argininosuccinate lyase (462 aa).

This sequence belongs to the lyase 1 family. Argininosuccinate lyase subfamily.

It is found in the cytoplasm. The enzyme catalyses 2-(N(omega)-L-arginino)succinate = fumarate + L-arginine. It functions in the pathway amino-acid biosynthesis; L-arginine biosynthesis; L-arginine from L-ornithine and carbamoyl phosphate: step 3/3. The polypeptide is Argininosuccinate lyase (Caldicellulosiruptor bescii (strain ATCC BAA-1888 / DSM 6725 / KCTC 15123 / Z-1320) (Anaerocellum thermophilum)).